A 211-amino-acid polypeptide reads, in one-letter code: ATP phosphoribosyltransferase (211 aa).

The protein belongs to the ATP phosphoribosyltransferase family. Short subfamily. In terms of assembly, heteromultimer composed of HisG and HisZ subunits.

It localises to the cytoplasm. It catalyses the reaction 1-(5-phospho-beta-D-ribosyl)-ATP + diphosphate = 5-phospho-alpha-D-ribose 1-diphosphate + ATP. It functions in the pathway amino-acid biosynthesis; L-histidine biosynthesis; L-histidine from 5-phospho-alpha-D-ribose 1-diphosphate: step 1/9. Functionally, catalyzes the condensation of ATP and 5-phosphoribose 1-diphosphate to form N'-(5'-phosphoribosyl)-ATP (PR-ATP). Has a crucial role in the pathway because the rate of histidine biosynthesis seems to be controlled primarily by regulation of HisG enzymatic activity. This chain is ATP phosphoribosyltransferase, found in Hahella chejuensis (strain KCTC 2396).